We begin with the raw amino-acid sequence, 426 residues long: Cell adhesion molecule CEACAM16 (426 aa).

The N-terminal stretch at 1-22 (MKMPLTWYSWFLLSAWILNTGA) is a signal peptide. The N-linked (GlcNAc...) asparagine glycan is linked to Asn-38. Residues 77–96 (ETPGPAHTGREAVRPDGSLD) are disordered. Residues 84 to 95 (TGREAVRPDGSL) show a composition bias toward basic and acidic residues. 2 Ig-like C2-type domains span residues 134–219 (PPTV…LNLT) and 224–310 (PERV…ASVV). Cys-155 and Cys-202 are oxidised to a cystine. N-linked (GlcNAc...) asparagine glycosylation is present at Asn-217. An intrachain disulfide couples Cys-253 to Cys-294.

It belongs to the immunoglobulin superfamily. CEA family. As to quaternary structure, homooligomer; can for homodimers and homotetramers. Interacts with TECTA and TECTB. Expressed in cochlear outer hair cells (OHC).

It is found in the secreted. Functionally, required for proper hearing, plays a role in maintaining the integrity of the tectorial membrane. The protein is Cell adhesion molecule CEACAM16 of Mus musculus (Mouse).